The following is a 691-amino-acid chain: Competence protein ComA (691 aa).

Helical transmembrane passes span 183–203 (HLVSISGLHVTMVAVLFAWLA), 220–240 (WVLAAGCAGALFYALLAGFSV), 280–300 (LAVLGVGTWLSFGLVAALIWA), 322–342 (VLSLVLLGYLFASLPLVSPLV), 347–367 (IPWFSWVLTPLALLGSVVPFA), and 396–416 (VAAAPLPLLVLAVCAALLLLL).

It to B.subtilis ComEC, H.influenzae REC2, and E.coli YcaI.

Its subcellular location is the cell inner membrane. Its function is as follows. Essential for natural transformation. Could be a transporter involved in DNA uptake. The chain is Competence protein ComA (comA) from Neisseria gonorrhoeae.